A 586-amino-acid chain; its full sequence is Ezrin (586 aa).

The 295-residue stretch at 2 to 296 (PKPINVRVTT…NHELYMRRRK (295 aa)) folds into the FERM domain. Position 60 is an N6-acetyllysine (Lys-60). Positions 115–120 (IYCPPE) match the [IL]-x-C-x-x-[DE] motif motif. At Tyr-146 the chain carries Phosphotyrosine; by PDGFR. An interaction with SCYL3 region spans residues 244 to 586 (EIRNISFNDK…KQRIDEFEAL (343 aa)). Positions 302–462 (VQQMKAQARE…QDDLVKTKEE (161 aa)) form a coiled coil. The segment at 306–341 (KAQAREEKHQKQLERQQLETEKKRRETVEREKEQMM) is disordered. Over residues 308–341 (QAREEKHQKQLERQQLETEKKRRETVEREKEQMM) the composition is skewed to basic and acidic residues. Tyr-354 is modified (phosphotyrosine; by PDGFR). Ser-366 is modified (phosphoserine). The residue at position 478 (Tyr-478) is a Phosphotyrosine. The disordered stretch occupies residues 485-564 (VQESLQDEGA…NENMRQGRDK (80 aa)). Residues 507-528 (GIRDDRNEEKRITEAEKNERVQ) show a composition bias toward basic and acidic residues. Positions 530–539 (QLLTLSSELS) are enriched in polar residues. Phosphoserine is present on Ser-535. The span at 540 to 564 (QARDENKRTHNDIIHNENMRQGRDK) shows a compositional bias: basic and acidic residues. Residue Thr-567 is modified to Phosphothreonine; by ROCK2 and PKC/PRKCI.

In terms of assembly, monomer. Homodimer. Interacts with PALS1 and NHERF2. Found in a complex with EZR, PODXL and NHERF2. Interacts with MCC, PLEKHG6, PODXL, SCYL3/PACE1, NHERF1 and TMEM8B. Interacts (when phosphorylated) with FES/FPS. Interacts with dimeric S100P, the interaction may be activating through unmasking of F-actin binding sites. Identified in complexes that contain VIM, EZR, AHNAK, BFSP1, BFSP2, ANK2, PLEC, PRX and spectrin. Detected in a complex composed of at least EZR, AHNAK, PPL and PRX. Interacts with PDPN (via cytoplasmic domain); activates RHOA and promotes epithelial-mesenchymal transition. Interacts with SPN/CD43 cytoplasmic tail, CD44 and ICAM2. Interacts with SLC9A3; interaction targets SLC9A3 to the apical membrane. Interacts with SLC9A1; regulates interactions of SLC9A1 with cytoskeletal and promotes stress fiber formation. Interacts with CLIC5; may work together in a complex which also includes RDX and MYO6 to stabilize linkages between the plasma membrane and subjacent actin cytoskeleton at the base of stereocilia. Post-translationally, phosphorylated by tyrosine-protein kinases. Phosphorylation by ROCK2 suppresses the head-to-tail association of the N-terminal and C-terminal halves resulting in an opened conformation which is capable of actin and membrane-binding. S-nitrosylation is induced by interferon-gamma and oxidatively-modified low-densitity lipoprotein (LDL(ox)) possibly implicating the iNOS-S100A8/9 transnitrosylase complex. Expressed in cerebral cortex, basal ganglia, hippocampus, hypophysis, and optic nerve. Weakly expressed in brain stem and diencephalon. Stronger expression was detected in gray matter of frontal lobe compared to white matter (at protein level). Component of the microvilli of intestinal epithelial cells. Preferentially expressed in astrocytes of hippocampus, frontal cortex, thalamus, parahippocampal cortex, amygdala, insula, and corpus callosum. Not detected in neurons in most tissues studied.

It localises to the apical cell membrane. The protein localises to the cell projection. Its subcellular location is the microvillus membrane. It is found in the ruffle membrane. The protein resides in the cytoplasm. It localises to the cell cortex. The protein localises to the cytoskeleton. Its subcellular location is the microvillus. A head-to-tail association, of the N-terminal and C-terminal halves results in a closed conformation (inactive form) which is incapable of actin or membrane-binding. Probably involved in connections of major cytoskeletal structures to the plasma membrane. In epithelial cells, required for the formation of microvilli and membrane ruffles on the apical pole. Along with PLEKHG6, required for normal macropinocytosis. This chain is Ezrin (EZR), found in Homo sapiens (Human).